We begin with the raw amino-acid sequence, 149 residues long: Large ribosomal subunit protein bL9 (149 aa).

Belongs to the bacterial ribosomal protein bL9 family.

Binds to the 23S rRNA. The chain is Large ribosomal subunit protein bL9 from Helicobacter pylori (strain G27).